The following is a 391-amino-acid chain: Homocysteine-responsive endoplasmic reticulum-resident ubiquitin-like domain member 1 protein (391 aa).

Position 1 is an N-acetylmethionine (methionine 1). The Cytoplasmic portion of the chain corresponds to 1–263 (MESETEPEPV…VEEDDEINRD (263 aa)). Residues 10-72 (VTLLVKSPNQ…LLDHQCLRDL (63 aa)) enclose the Ubiquitin-like domain. Residues 100-126 (KVAESTEEPAGSNRGQYPEDSSSDGLR) are disordered. Over residues 112 to 124 (NRGQYPEDSSSDG) the composition is skewed to polar residues. Residues 115 to 200 (QYPEDSSSDG…ASGAFVPPPS (86 aa)) are interaction with UBQLN1. The residue at position 135 (serine 135) is a Phosphoserine. The helical transmembrane segment at 264–284 (WLDWTYSAATFSVFLSILYFY) threads the bilayer. The Lumenal portion of the chain corresponds to 285 to 289 (SSLSR). The chain crosses the membrane as a helical span at residues 290 to 310 (FLMVMGATVVMYLHHVGWFPF). Topologically, residues 311 to 391 (RPRPVQNFPN…LPEGPPAIAN (81 aa)) are cytoplasmic. Residues 318-359 (FPNDGPPPDIVNQDPNNNLQEGTDPETEDPNHVPPDRGVLDG) are disordered. Residues 346–357 (DPNHVPPDRGVL) show a composition bias toward basic and acidic residues.

In terms of assembly, interacts with PSEN1 and PSEN2. Interacts with UBXN6. Interacts with UBQLN1, UBQLN2 and UBQLN4. Component of the HRD1 complex, which comprises at least SYNV1/HRD1, FAM8A1, HERPUD1/HERP, OS9, SEL1L and UBE2J1. FAM8A1 binding to SYNV1 may promote recruitment of HERPUD1 to the HRD1 complex.

The protein resides in the endoplasmic reticulum membrane. Functionally, component of the endoplasmic reticulum quality control (ERQC) system also called ER-associated degradation (ERAD) involved in ubiquitin-dependent degradation of misfolded endoplasmic reticulum proteins. Binds to ubiquilins and this interaction is required for efficient degradation of CD3D via the ERAD pathway. This is Homocysteine-responsive endoplasmic reticulum-resident ubiquitin-like domain member 1 protein (HERPUD1) from Pongo abelii (Sumatran orangutan).